The sequence spans 60 residues: Cytotoxin 4 (60 aa).

Cystine bridges form between Cys-3–Cys-21, Cys-14–Cys-38, Cys-42–Cys-53, and Cys-54–Cys-59.

It belongs to the three-finger toxin family. Short-chain subfamily. Type IA cytotoxin sub-subfamily. As to quaternary structure, monomer in solution; Homodimer and oligomer in the presence of negatively charged lipids forming a pore with a size ranging between 20 and 30 Angstroms. Expressed by the venom gland.

Its subcellular location is the secreted. It localises to the target cell membrane. Shows cytolytic activity on many different cells by forming pore in lipid membranes. In vivo, increases heart rate or kills the animal by cardiac arrest. In addition, it binds to heparin with high affinity, interacts with Kv channel-interacting protein 1 (KCNIP1) in a calcium-independent manner, and binds to integrin alpha-V/beta-3 (ITGAV/ITGB3) with moderate affinity. This is Cytotoxin 4 from Naja annulifera (Banded Egyptian cobra).